The primary structure comprises 321 residues: Lipoyl synthase (321 aa).

[4Fe-4S] cluster is bound by residues Cys-68, Cys-73, Cys-79, Cys-94, Cys-98, Cys-101, and Ser-308. One can recognise a Radical SAM core domain in the interval 80–297 (FNHGTATFMI…KAEALAMGFT (218 aa)).

This sequence belongs to the radical SAM superfamily. Lipoyl synthase family. [4Fe-4S] cluster serves as cofactor.

Its subcellular location is the cytoplasm. The catalysed reaction is [[Fe-S] cluster scaffold protein carrying a second [4Fe-4S](2+) cluster] + N(6)-octanoyl-L-lysyl-[protein] + 2 oxidized [2Fe-2S]-[ferredoxin] + 2 S-adenosyl-L-methionine + 4 H(+) = [[Fe-S] cluster scaffold protein] + N(6)-[(R)-dihydrolipoyl]-L-lysyl-[protein] + 4 Fe(3+) + 2 hydrogen sulfide + 2 5'-deoxyadenosine + 2 L-methionine + 2 reduced [2Fe-2S]-[ferredoxin]. Its pathway is protein modification; protein lipoylation via endogenous pathway; protein N(6)-(lipoyl)lysine from octanoyl-[acyl-carrier-protein]: step 2/2. Its function is as follows. Catalyzes the radical-mediated insertion of two sulfur atoms into the C-6 and C-8 positions of the octanoyl moiety bound to the lipoyl domains of lipoate-dependent enzymes, thereby converting the octanoylated domains into lipoylated derivatives. The sequence is that of Lipoyl synthase from Salmonella arizonae (strain ATCC BAA-731 / CDC346-86 / RSK2980).